A 527-amino-acid polypeptide reads, in one-letter code: Protein PLASTID TRANSCRIPTIONALLY ACTIVE 12, chloroplastic (527 aa).

The N-terminal 30 residues, Met1–Arg30, are a transit peptide targeting the chloroplast. A PHYA-interacting region 1 (PIR1) region spans residues Met1–Pro115. The interval Ser89–Tyr188 is disordered. Residues Thr163–Ser181 are compositionally biased toward acidic residues. 2 consecutive short sequence motifs (nuclear localization signal) follow at residues Asp204–His211 and Trp235–Gln242. Residues Asp252 to Glu352 are PHYA-interacting region 2 (PIR2). Acidic residues predominate over residues Gly458–Lys471. The disordered stretch occupies residues Gly458–Pro527. The span at Glu485–Leu504 shows a compositional bias: basic and acidic residues. Residues Glu506 to Pro527 are compositionally biased toward acidic residues. A Required and sufficient for transcriptional transactivation activity and to trigger PIF proteins degradation motif is present at residues Glu512–Asp520.

Component of the transcriptionally active chromosome (TAC) complexes. Interacts with PTAC14 and PTAC7. Binds directly to PTAC6/PAP8 in the nucleus. Interacts with MED14. Binds to SL1/MTERF3. Binds to photoactivated phytochromes (e.g. PHYA and PHYB) via their photosensory domains; these interactions stimulate its light-mediated accumulation. Associates, via its N-terminal region, with phytochrome-interacting factors (PIFs) including PIF1, PIF3, PIF4, PIF5, PIF6, BHLH72/PIF7, UNE10/PIF8 and PIL1. Binds to RAD4. Associates with MRL7/RCB. Mostly expressed in cotyledons, leaves, stems and flowers, but barely in roots.

It localises to the plastid. It is found in the chloroplast. Its subcellular location is the nucleus. Involved in plastid gene expression. Acidic transcriptional coactivator necessary for the transactivation of many PIFs target genes (class B genes), particularly during the regulation of hypocotyl growth. Plays dual opposite roles in regulating hypocotyl growth, preventing it in red and far-red conditions, but promoting it otherwise. Required in the nucleus for the initiation of photomorphogenesis mediated by phytochromes (PHYs) (e.g. PHYA and PHYB) by mediating PHYs localization to photobodies, especially in response to red and far-red light, and implicating phytochrome nuclear bodies as sites of proteolysis for PHYs and PIFs proteins (e.g. PIF1 and PIF3). Acts downstream of PHYs and upstream of DET1. Involved in UV tolerance in both roots and hypocotyls, specifically in dark conditions. Element of a PIF4/HMR/MED14-dependent thermoresponsive process; acts as a PIF4 transcriptional coactivator to trigger the thermoresponsive growth-relevant genes (e.g. mainly involved in biosynthesis and signaling of the phytohormone auxin) and promote warm-temperature-dependent (e.g. 27 degrees Celsius) PIF4 and MED14 stabilization and accumulation, being more prominently involved in long days (LD) and continuous red light (Rc) than in short days (SD), thus modulating warm temperature elicitation of MED14-dependent thermomorphogenesis (e.g. hypocotyl elongation). This Arabidopsis thaliana (Mouse-ear cress) protein is Protein PLASTID TRANSCRIPTIONALLY ACTIVE 12, chloroplastic.